Consider the following 397-residue polypeptide: Elongation factor Tu (397 aa).

The tr-type G domain maps to lysine 10–glutamine 207. The G1 stretch occupies residues glycine 19–threonine 26. Glycine 19 to threonine 26 contacts GTP. Position 26 (threonine 26) interacts with Mg(2+). The segment at glycine 60 to alanine 64 is G2. The segment at aspartate 81 to glycine 84 is G3. GTP-binding positions include aspartate 81–histidine 85 and asparagine 136–aspartate 139. The tract at residues asparagine 136–aspartate 139 is G4. The segment at serine 174–leucine 176 is G5.

It belongs to the TRAFAC class translation factor GTPase superfamily. Classic translation factor GTPase family. EF-Tu/EF-1A subfamily. As to quaternary structure, monomer.

Its subcellular location is the cytoplasm. The enzyme catalyses GTP + H2O = GDP + phosphate + H(+). Functionally, GTP hydrolase that promotes the GTP-dependent binding of aminoacyl-tRNA to the A-site of ribosomes during protein biosynthesis. This Lawsonia intracellularis (strain PHE/MN1-00) protein is Elongation factor Tu.